The chain runs to 187 residues: MNETQIQRETRQVVEDVLEKTNLKQGALFVLGLSSSEVLGGQIGKESSQEIGELIVETILGILGSRGIHLAVQGCEHVNRALVVERQVAEQFGLEIVSVHPTLHAGGSGQLAAFKFMQDPVEVEFIKAHAGLDIGDTAIGMHVKHVQVPIRPILREIGHAHVTALASRPKLIGGARAHYPQDAIRKS.

This sequence belongs to the UPF0340 family.

This is UPF0340 protein SPT_0687 from Streptococcus pneumoniae (strain Taiwan19F-14).